An 822-amino-acid polypeptide reads, in one-letter code: MRKHKAPPSGSPRTMAQDNSQSEPSGGNGESPAATTAAAASVEAPQQSLLLGHNAADASAAAVASRLAPPPCQHPINNSNNNSNISNNSSNSSSSKERPRPTVRFISLLHVASYVLCLCAFSFALYGNVRQTRLEQRMQRLQQLDARIVELELRLEQQQLLHWPAEQTQVLASHPSDRDSSNSNNGSQHLELHVRRELHRLRRDVSHLQLTRRQQRRQAAEAAAAAASGEGGSGGGQCQCQPGPPGPPGPPGKRGKRGKKGDSGEKGDPGLNGISGEKGAAGKPGDKGQKGDVGHPGMDVFQTVKGLKRSVTTLHGGTLGYAEIVAVKDLQEAGVNVSASTVIKLKGEPGEPGPPGPPGEAGQPGAPGERGPPGEIGAQGPQGEAGQPGVAGPPGVAGAPGTKGDKGDRGDRGLTTTIKGDEFPTGIIEGPPGPAGPPGPPGEPGARGEPGPIGPAGPPGEKGPRGKRGKRIFGPGGTKIDEDYDDPPVTLLRGPPGPPGIAGKDGRDGRDGSKGEPGEPGEPGSLGPRGLDGLPGEPGIEGPPGLPGYQGPPGEKGDRGDIGPPGLMGPPGLPGPPGYPGVKGDKGDRGDSYRKMRRRQDDGMSDAPHMPTIEYLYGPPGPPGPMGPPGHTGSQGERGLDGRKGDPGEKGHKGDQGPMGLPGPMGMRGESGPSGPSGKAGIPGAQGETGHKGERGDPGLPGTDGIPGQEGPRGEQGSRGDAGPPGKRGRKGDRGDKGEQGVPGLDAPCPLGADGLPLPGCGWRPPKEPIISTPVHKDYLPDVTQPESNTSDYEQEEEEDDEQAEDNENEYDEYQDNLHNNE.

2 disordered regions span residues 1 to 45 and 66 to 99; these read MRKH…VEAP and RLAPPPCQHPINNSNNNSNISNNSSNSSSSKERP. Residues 1–104 lie on the Cytoplasmic side of the membrane; sequence MRKHKAPPSG…SKERPRPTVR (104 aa). The span at 11 to 25 shows a compositional bias: polar residues; that stretch reads SPRTMAQDNSQSEPS. Residues 76–94 are compositionally biased toward low complexity; the sequence is INNSNNNSNISNNSSNSSS. Residues 105–125 form a helical; Signal-anchor for type II membrane protein membrane-spanning segment; the sequence is FISLLHVASYVLCLCAFSFAL. Over 126 to 822 the chain is Extracellular; it reads YGNVRQTRLE…EYQDNLHNNE (697 aa). Residues 131–162 are a coiled coil; that stretch reads QTRLEQRMQRLQQLDARIVELELRLEQQQLLH. Disordered regions lie at residues 169–188, 205–297, and 345–822; these read QVLASHPSDRDSSNSNNGSQ, VSHL…GHPG, and LKGE…HNNE. Residues 194–222 adopt a coiled-coil conformation; sequence VRRELHRLRRDVSHLQLTRRQQRRQAAEA. Collagen-like domains are found at residues 241–299, 350–409, 430–469, 493–526, 527–586, 621–680, and 681–740; these read QPGP…PGMD, GEPG…KGDR, GPPGPAGPPGPPGEPGARGEPGPIGPAGPPGEKGPRGKRG, RGPPGPPGIAGKDGRDGRDGSKGEPGEPGEPGSL, GPRG…KGDK, GPPG…SGKA, and GIPG…KGEQ. The span at 242–251 shows a compositional bias: pro residues; it reads PGPPGPPGPP. The segment covering 284–293 has biased composition (basic and acidic residues); sequence PGDKGQKGDV. The span at 360 to 402 shows a compositional bias: low complexity; it reads EAGQPGAPGERGPPGEIGAQGPQGEAGQPGVAGPPGVAGAPGT. A compositionally biased stretch (basic and acidic residues) spans 403–412; it reads KGDKGDRGDR. Residues 431–443 show a composition bias toward pro residues; that stretch reads PPGPAGPPGPPGE. Over residues 504 to 517 the composition is skewed to basic and acidic residues; that stretch reads KDGRDGRDGSKGEP. A compositionally biased stretch (low complexity) spans 522-540; sequence EPGSLGPRGLDGLPGEPGI. Positions 567–579 are enriched in pro residues; the sequence is LMGPPGLPGPPGY. Basic and acidic residues predominate over residues 583-602; the sequence is KGDKGDRGDSYRKMRRRQDD. Positions 619–628 are enriched in pro residues; sequence PPGPPGPMGP. Over residues 638–655 the composition is skewed to basic and acidic residues; the sequence is RGLDGRKGDPGEKGHKGD. Low complexity predominate over residues 658 to 668; sequence PMGLPGPMGMR. Residues 790 to 822 are a coiled coil; sequence TSDYEQEEEEDDEQAEDNENEYDEYQDNLHNNE. A compositionally biased stretch (acidic residues) spans 793–815; the sequence is YEQEEEEDDEQAEDNENEYDEYQ.

The protein resides in the cell membrane. The chain is Collagen alpha chain CG42342 from Drosophila melanogaster (Fruit fly).